The following is a 287-amino-acid chain: Carbon monoxide dehydrogenase medium chain (287 aa).

The 177-residue stretch at 1 to 177 (MIPPRFEYHA…VEIRVPAFAQ (177 aa)) folds into the FAD-binding PCMH-type domain. FAD is bound by residues 32-36 (AGGHS) and 111-115 (TIGGD).

As to quaternary structure, dimer of heterotrimers. Each heterotrimer consists of a large, a medium and a small subunit. Requires FAD as cofactor.

The enzyme catalyses CO + a quinone + H2O = a quinol + CO2. Its function is as follows. Catalyzes the oxidation of carbon monoxide to carbon dioxide. The sequence is that of Carbon monoxide dehydrogenase medium chain (cutM) from Hydrogenophaga pseudoflava (Pseudomonas carboxydoflava).